The following is a 250-amino-acid chain: AA9 family lytic polysaccharide monooxygenase B (250 aa).

A signal peptide spans 1–21 (MTLSKITSIAGLLASASLVAG). Cu(2+) is bound by residues H22 and H107. H22 carries the methylhistidine modification. 2 disulfides stabilise this stretch: C77-C199 and C118-C122. N159 carries an N-linked (GlcNAc...) asparagine glycan. Residues H185 and Q194 each contribute to the O2 site. Y196 is a Cu(2+) binding site.

The protein belongs to the polysaccharide monooxygenase AA9 family. The cofactor is Cu(2+). In terms of processing, the catalytically essential N-terminal histidine His-22 is post-translationally modified by methylation to prevent protonation of the histidine side chain, and protect the critical active site of the enzyme from oxidative damage.

It localises to the secreted. The enzyme catalyses [(1-&gt;4)-beta-D-glucosyl]n+m + reduced acceptor + O2 = 4-dehydro-beta-D-glucosyl-[(1-&gt;4)-beta-D-glucosyl]n-1 + [(1-&gt;4)-beta-D-glucosyl]m + acceptor + H2O.. Lytic polysaccharide monooxygenase (LPMO) that depolymerizes crystalline and amorphous polysaccharides via the oxidation of scissile alpha- or beta-(1-4)-glycosidic bonds, yielding C1 and C4 oxidation products. Catalysis by LPMOs requires the reduction of the active-site copper from Cu(II) to Cu(I) by a reducing agent and H(2)O(2) or O(2) as a cosubstrate. Shows activity on phosphoric acid swollen cellulose, on NaOH pretreated soy spent flakes as well as on crystalline cellulose (Avicel). Does not have a positive effect on cel6A activity, but acts synergistically with endoglucanase egl7. This is AA9 family lytic polysaccharide monooxygenase B from Aspergillus fumigatus (strain ATCC MYA-4609 / CBS 101355 / FGSC A1100 / Af293) (Neosartorya fumigata).